We begin with the raw amino-acid sequence, 168 residues long: Transcriptional repressor NrdR (168 aa).

The segment at 3–34 (CPFCQDAENKVIDSRESHEGSVIRRRRECLTC) is a zinc-finger region. The ATP-cone domain occupies 49–139 (PLIVKKDGRR…VYRSFRDIAE (91 aa)).

This sequence belongs to the NrdR family. Zn(2+) serves as cofactor.

Functionally, negatively regulates transcription of bacterial ribonucleotide reductase nrd genes and operons by binding to NrdR-boxes. This chain is Transcriptional repressor NrdR, found in Myxococcus xanthus (strain DK1622).